The primary structure comprises 969 residues: Dual serine/threonine and tyrosine protein kinase (969 aa).

Residues 7–37 (QEFRRYLRNRNQLQHVLEETQQALELINLEN) are a coiled coil. The Protein kinase domain maps to 632–894 (PHCAEEIGRG…PLLGAIVPVL (263 aa)). Residues 638–646 (IGRGQYGIV) and Lys662 contribute to the ATP site. Asp760 functions as the Proton acceptor in the catalytic mechanism. Residues 904–945 (SKSLQEVSSDKLQESSTDSRNPALALAEPYNQRGTVVSPPPT) form a disordered region.

Belongs to the protein kinase superfamily. Ser/Thr protein kinase family.

The protein localises to the cytoplasm. The catalysed reaction is L-seryl-[protein] + ATP = O-phospho-L-seryl-[protein] + ADP + H(+). The enzyme catalyses L-threonyl-[protein] + ATP = O-phospho-L-threonyl-[protein] + ADP + H(+). It catalyses the reaction L-tyrosyl-[protein] + ATP = O-phospho-L-tyrosyl-[protein] + ADP + H(+). In Apis mellifera (Honeybee), this protein is Dual serine/threonine and tyrosine protein kinase.